A 651-amino-acid polypeptide reads, in one-letter code: Probable replication restart protein PriA (651 aa).

Residues cysteine 371, cysteine 374, cysteine 380, cysteine 383, cysteine 399, cysteine 402, cysteine 411, and cysteine 414 each contribute to the Zn(2+) site.

The protein belongs to the helicase family. PriA subfamily. In terms of assembly, component of the replication restart primosome. It depends on Zn(2+) as a cofactor.

Functionally, initiates the restart of stalled replication forks, which reloads the replicative helicase on sites other than the origin of replication. Recognizes and binds to abandoned replication forks and remodels them to uncover a helicase loading site. Promotes assembly of the primosome at these replication forks. This is Probable replication restart protein PriA from Mycobacterium leprae (strain TN).